The chain runs to 341 residues: Krueppel-like factor 17 (341 aa).

Residues 214-252 (VTESNTQEEPFVREPPTPAPEGAESPSTSRGATRRQSPV) form a disordered region. Over residues 238 to 252 (SPSTSRGATRRQSPV) the composition is skewed to polar residues. 3 consecutive C2H2-type zinc fingers follow at residues 256 to 280 (YVCT…QRKH), 286 to 310 (FACD…KRIH), and 316 to 338 (HKCD…KRTH).

The protein belongs to the Sp1 C2H2-type zinc-finger protein family. Exclusively expressed in testis and ovary. Localized to step 3-8 spermatids in testis and growing oocytes in ovary.

The protein localises to the nucleus. Transcription repressor that binds to the promoter of target genes and prevents their expression. Acts as a negative regulator of epithelial-mesenchymal transition and metastasis in breast cancer. Specifically binds the 5'-CACCC-3' sequence in the promoter of ID1, a key metastasis regulator in breast cancer, and repress its expression. May be a germ cell-specific transcription factor that plays important roles in spermatid differentiation and oocyte development. This chain is Krueppel-like factor 17 (Klf17), found in Mus musculus (Mouse).